The sequence spans 529 residues: Delayed-rectifier potassium channel regulatory subunit KCNS1 (529 aa).

Topologically, residues 1–217 (MLMLLVRGTR…LTMENPGYSL (217 aa)) are cytoplasmic. Residues 218–239 (PSKLFSCVSISVVLASIAAMCI) traverse the membrane as a helical segment. Topologically, residues 240–270 (HSLPEYQAREAAAAVAAVAAGRSPEGVRDDP) are extracellular. A helical membrane pass occupies residues 271 to 293 (VLRRLEYFCIAWFSFEVSSRLLL). Over 294–304 (APSTRNFFCHP) the chain is Cytoplasmic. The helical transmembrane segment at 305 to 322 (LNLIDIVSVLPFYLTLLA) threads the bilayer. Residues 323-340 (GVALGDQGGTGGKELGHL) are Extracellular-facing. The helical; Voltage-sensor transmembrane segment at 341–361 (GKVVQVFRLMRIFRVLKLARH) threads the bilayer. The Cytoplasmic portion of the chain corresponds to 362–376 (STGLRSLGATLKHSY). Residues 377-398 (REVGILLLYLAVGVSVFSGVAY) form a helical membrane-spanning segment. The Extracellular portion of the chain corresponds to 399–411 (TAEKEEDVGFNTI). Positions 412–423 (PACWWWGTVSMT) form an intramembrane region, helical. A Selectivity filter motif is present at residues 424–429 (TVGYGD). An intramembrane segment occupies 424–431 (TVGYGDVV). The Extracellular portion of the chain corresponds to 432–438 (PVTVAGK). A helical membrane pass occupies residues 439-467 (LAASGCILGGILVVALPITIIFNKFSHFY). Residues 468–529 (RRQKALEAAV…PSEPPHPQMY (62 aa)) are Cytoplasmic-facing. Positions 500 to 529 (LETSREISQEGRSADLETQAPSEPPHPQMY) are disordered. Residues 502–514 (TSREISQEGRSAD) are compositionally biased toward basic and acidic residues.

The protein belongs to the potassium channel family. S (TC 1.A.1.2) subfamily. Kv9.1/KCNS1 sub-subfamily. Heterotetramer with KCNB1. Heterotetramer with KCNB2. Does not form homomultimers.

Its subcellular location is the cell membrane. Functionally, potassium channel regulatory subunit that modulate the delayed rectifier voltage-gated potassium channel activity of KCNB1 and KCNB2 by altering their kinetics, expression levels, and shifting the half-inactivation potential to more polarized values. While it does not form functional channels on its own, it can form functional heterotetrameric channels with KCNB1 and KCNB2. Each regulatory subunit has unique regulatory properties that can lead to extensive inhibition, significant changes in kinetics, and/or substantial shifts in the voltage dependencies of the inactivation process. The chain is Delayed-rectifier potassium channel regulatory subunit KCNS1 from Colobus guereza (Mantled guereza).